A 34-amino-acid chain; its full sequence is Calcitonin-like peptide 2 (34 aa).

An intrachain disulfide couples Cys-2 to Cys-7. Position 34 is a phenylalanine amide (Phe-34).

The chain is Calcitonin-like peptide 2 from Odorrana schmackeri (Schmacker's frog).